Consider the following 212-residue polypeptide: Ras-related protein RABC1 (212 aa).

The residue at position 2 (Gly2) is an N-acetylglycine. 20–27 (GDSGVGKS) contributes to the GTP binding site. The short motif at 41 to 49 (LSPTIGVDF) is the Effector region element. GTP contacts are provided by residues 67–71 (DTAGQ), 127–130 (NKVD), and 157–158 (SA). A disordered region spans residues 182 to 212 (TAEGSSGGKKNIFKQNPAQTTSTSSSYCCSS). Positions 201 to 212 (TTSTSSSYCCSS) are enriched in low complexity. 2 S-geranylgeranyl cysteine lipidation sites follow: Cys209 and Cys210.

It belongs to the small GTPase superfamily. Rab family.

Its subcellular location is the cell membrane. Intracellular vesicle trafficking and protein transport. This is Ras-related protein RABC1 (RABC1) from Arabidopsis thaliana (Mouse-ear cress).